Here is a 333-residue protein sequence, read N- to C-terminus: 2-haloacrylate reductase (333 aa).

153–159 (AAAGGMG) is a binding site for NADP(+).

This sequence belongs to the zinc-containing alcohol dehydrogenase family.

It carries out the reaction (S)-2-chloropropanoate + NADP(+) = 2-chloroacrylate + NADPH + H(+). In terms of biological role, involved in the degradation of unsaturated organohalogen compounds. Catalyzes the NADPH-dependent reduction of the carbon-carbon double bond of 2-chloroacrylate to produce (S)-2-chloropropionate, which is probably further metabolized to (R)-lactate by (S)-2-haloacid dehalogenase. Can also use 2-bromoacrylate as substrate. Does not act on acrylate, methacrylate, 1,4-benzoquinone and 1,4-naphthoquinone. The chain is 2-haloacrylate reductase from Burkholderia sp.